Consider the following 137-residue polypeptide: Ribosome-binding factor A (137 aa).

The tract at residues 114–137 (QLIDEARAEDRELRPEDDETGNNE) is disordered. Residues 117–127 (DEARAEDRELR) are compositionally biased toward basic and acidic residues. Residues 128-137 (PEDDETGNNE) are compositionally biased toward acidic residues.

Belongs to the RbfA family. Monomer. Binds 30S ribosomal subunits, but not 50S ribosomal subunits or 70S ribosomes.

The protein resides in the cytoplasm. Its function is as follows. One of several proteins that assist in the late maturation steps of the functional core of the 30S ribosomal subunit. Associates with free 30S ribosomal subunits (but not with 30S subunits that are part of 70S ribosomes or polysomes). Required for efficient processing of 16S rRNA. May interact with the 5'-terminal helix region of 16S rRNA. This Alcanivorax borkumensis (strain ATCC 700651 / DSM 11573 / NCIMB 13689 / SK2) protein is Ribosome-binding factor A.